A 557-amino-acid polypeptide reads, in one-letter code: Protein Red (557 aa).

Positions 1–90 (MPERDSEPFS…YAKLRQQEIE (90 aa)) are disordered. Residues 16–25 (DGHDVDDPHS) are compositionally biased toward basic and acidic residues. Residues 42-53 (TPRAAPTSAPPS) show a composition bias toward low complexity. N6-acetyllysine occurs at positions 98 and 137. Residue Lys-151 forms a Glycyl lysine isopeptide (Lys-Gly) (interchain with G-Cter in SUMO2) linkage. The segment at 181 to 205 (KEKEEEELMEKPQKETKKDEDPENK) is disordered. Position 287 is a phosphoserine (Ser-287). Residues 294 to 303 (RNKKLKKKDK) show a composition bias toward basic residues. The interval 294–402 (RNKKLKKKDK…PMDVDKGPGS (109 aa)) is disordered. Over residues 304-313 (GKLEEKKPPE) the composition is skewed to basic and acidic residues. Residues Lys-310 and Lys-331 each participate in a glycyl lysine isopeptide (Lys-Gly) (interchain with G-Cter in SUMO2) cross-link. Residues 332 to 398 (TPRDKERERY…VDDEPMDVDK (67 aa)) are compositionally biased toward basic and acidic residues. Repeat copies occupy residues 342–343 (RE), 344–345 (RE), 346–347 (RD), 348–349 (RE), 350–351 (RD), 352–353 (RD), 354–355 (RE), 356–357 (RD), 358–359 (RE), 360–361 (RD), 362–363 (RE), 364–365 (RE), 366–367 (RE), 368–369 (RD), 370–371 (RE), 372–373 (RE), and 374–375 (RE). A 17 X 2 AA tandem repeats of R-[ED] region spans residues 342–375 (RERERDRERDRDRERDRERDRERERERDRERERE). Glycyl lysine isopeptide (Lys-Gly) (interchain with G-Cter in SUMO2) cross-links involve residues Lys-386, Lys-388, Lys-404, and Lys-408. Phosphoserine is present on residues Ser-417 and Ser-460. A Phosphothreonine modification is found at Thr-485. Residues Lys-496, Lys-501, and Lys-509 each participate in a glycyl lysine isopeptide (Lys-Gly) (interchain with G-Cter in SUMO2) cross-link. At Ser-536 the chain carries Phosphoserine. Residues Lys-541, Lys-543, Lys-544, and Lys-553 each participate in a glycyl lysine isopeptide (Lys-Gly) (interchain with G-Cter in SUMO2) cross-link.

This sequence belongs to the RED family. Component of the spliceosome B complex. Interacts with SMU1. Interacts with MAD1L1. May interact with DHX15.

It localises to the nucleus. It is found in the nucleoplasm. The protein resides in the chromosome. The protein localises to the cytoplasm. Its subcellular location is the cytoskeleton. It localises to the spindle pole. Involved in pre-mRNA splicing as a component of the spliceosome. Auxiliary spliceosomal protein that regulates selection of alternative splice sites in a small set of target pre-mRNA species. Required for normal mitotic cell cycle progression. Recruits MAD1L1 and MAD2L1 to kinetochores, and is required to trigger the spindle assembly checkpoint. Required for normal accumulation of SMU1. This chain is Protein Red (Ik), found in Rattus norvegicus (Rat).